We begin with the raw amino-acid sequence, 200 residues long: UPF0637 protein LCABL_14170 (200 aa).

It belongs to the UPF0637 family.

This chain is UPF0637 protein LCABL_14170, found in Lacticaseibacillus casei (strain BL23) (Lactobacillus casei).